A 308-amino-acid polypeptide reads, in one-letter code: Probable pyridoxal 5'-phosphate synthase subunit pdx-1 (308 aa).

Residue Asp-30 coordinates D-ribose 5-phosphate. Catalysis depends on Lys-87, which acts as the Schiff-base intermediate with D-ribose 5-phosphate. Residue Gly-159 participates in D-ribose 5-phosphate binding. Arg-171 serves as a coordination point for D-glyceraldehyde 3-phosphate. D-ribose 5-phosphate-binding positions include Gly-224 and 245 to 246 (GS).

It belongs to the PdxS/SNZ family.

The enzyme catalyses aldehydo-D-ribose 5-phosphate + D-glyceraldehyde 3-phosphate + L-glutamine = pyridoxal 5'-phosphate + L-glutamate + phosphate + 3 H2O + H(+). Its pathway is cofactor biosynthesis; pyridoxal 5'-phosphate biosynthesis. Its function is as follows. Catalyzes the formation of pyridoxal 5'-phosphate from ribose 5-phosphate (RBP), glyceraldehyde 3-phosphate (G3P) and ammonia. The ammonia is provided by pdx-2. Can also use ribulose 5-phosphate and dihydroxyacetone phosphate as substrates, resulting from enzyme-catalyzed isomerization of RBP and G3P, respectively. Also plays an indirect role in resistance to singlet oxygen-generating photosensitizers. This Neurospora crassa (strain ATCC 24698 / 74-OR23-1A / CBS 708.71 / DSM 1257 / FGSC 987) protein is Probable pyridoxal 5'-phosphate synthase subunit pdx-1 (pdx-1).